We begin with the raw amino-acid sequence, 382 residues long: Mannitol-1-phosphate 5-dehydrogenase (382 aa).

NAD(+) is bound at residue Ala3–Gly14.

This sequence belongs to the mannitol dehydrogenase family.

It carries out the reaction D-mannitol 1-phosphate + NAD(+) = beta-D-fructose 6-phosphate + NADH + H(+). This Klebsiella pneumoniae (strain 342) protein is Mannitol-1-phosphate 5-dehydrogenase.